The chain runs to 171 residues: Peptide methionine sulfoxide reductase MsrA (171 aa).

C13 is a catalytic residue.

It belongs to the MsrA Met sulfoxide reductase family.

It catalyses the reaction L-methionyl-[protein] + [thioredoxin]-disulfide + H2O = L-methionyl-(S)-S-oxide-[protein] + [thioredoxin]-dithiol. The catalysed reaction is [thioredoxin]-disulfide + L-methionine + H2O = L-methionine (S)-S-oxide + [thioredoxin]-dithiol. In terms of biological role, has an important function as a repair enzyme for proteins that have been inactivated by oxidation. Catalyzes the reversible oxidation-reduction of methionine sulfoxide in proteins to methionine. This is Peptide methionine sulfoxide reductase MsrA from Mycobacterium sp. (strain JLS).